We begin with the raw amino-acid sequence, 630 residues long: Putative F-box/LRR-repeat protein At3g49150 (630 aa).

Residues 15 to 63 (KDIISDLPEALICHILSFLPIEDSALTSVLSKKWQHLFAFRPNLEFDDA) enclose the F-box domain. LRR repeat units follow at residues 101–129 (CRDF…DLRC), 152–178 (RIET…YLNK), 180–205 (LLRH…FIMN), 228–253 (CEDV…VYHD), 300–325 (ISNV…QIPV), 337–362 (DQKA…IFDG), 406–436 (CDDY…KLFY), 437–465 (DTQI…FNAR), and 567–590 (DSSI…GLNW).

This chain is Putative F-box/LRR-repeat protein At3g49150, found in Arabidopsis thaliana (Mouse-ear cress).